Here is a 31-residue protein sequence, read N- to C-terminus: Protamine CIII (31 aa).

Positions 1-31 (MPRRRRASRPVRRRRRPRVSRRRRRGGRRRR) are disordered.

In terms of tissue distribution, testis.

Its subcellular location is the nucleus. The protein localises to the chromosome. Protamines substitute for histones in the chromatin of sperm during the haploid phase of spermatogenesis. They compact sperm DNA into a highly condensed, stable and inactive complex. The polypeptide is Protamine CIII (Oncorhynchus mykiss (Rainbow trout)).